Reading from the N-terminus, the 158-residue chain is Acetolactate synthase small subunit (158 aa).

Positions 4–78 (ILSVLLENES…DVLRVIKVGQ (75 aa)) constitute an ACT domain.

Belongs to the acetolactate synthase small subunit family. In terms of assembly, dimer of large and small chains.

It carries out the reaction 2 pyruvate + H(+) = (2S)-2-acetolactate + CO2. It functions in the pathway amino-acid biosynthesis; L-isoleucine biosynthesis; L-isoleucine from 2-oxobutanoate: step 1/4. The protein operates within amino-acid biosynthesis; L-valine biosynthesis; L-valine from pyruvate: step 1/4. The protein is Acetolactate synthase small subunit (ilvH) of Buchnera aphidicola subsp. Schizaphis graminum (strain Sg).